The primary structure comprises 530 residues: Ubiquitin carboxyl-terminal hydrolase 17 (530 aa).

Positions Ala-80 to Lys-375 constitute a USP domain. The active-site Nucleophile is Cys-89. His-334 functions as the Proton acceptor in the catalytic mechanism. Composition is skewed to basic and acidic residues over residues Ser-382–Arg-392 and Asp-398–Pro-413. Disordered regions lie at residues Ser-382–Gln-416 and Ser-490–Gln-530. Residues Thr-399–Gln-530 are mediates interaction with SUDS3. The span at Glu-498–Gly-510 shows a compositional bias: polar residues. Over residues Arg-511–Arg-524 the composition is skewed to basic residues.

This sequence belongs to the peptidase C19 family. USP17 subfamily. Interacts with SUDS3; the interaction is direct. As to expression, broadly expressed.

It localises to the nucleus. The protein localises to the endoplasmic reticulum. The enzyme catalyses Thiol-dependent hydrolysis of ester, thioester, amide, peptide and isopeptide bonds formed by the C-terminal Gly of ubiquitin (a 76-residue protein attached to proteins as an intracellular targeting signal).. Deubiquitinating enzyme that removes conjugated ubiquitin from specific proteins to regulate different cellular processes. Regulates cell proliferation by deubiquitinating and inhibiting RCE1 thereby controlling the small GTPases NRAS and HRAS localization and activation. In parallel, mediates deubiquitination of CDC25A, preventing CDC25A degradation by the proteasome during the G1/S and G2/M phases promoting cell-cycle progression. Also regulates cell proliferation and apoptosis through deubiquitination of SUDS3 a regulator of histone deacetylation. Through activation of the Rho family GTPases RAC1A, CDC42 and RHOA, regulates cell migration. Through the cleavage of 'Lys-48'- and 'Lys-63'-linked polyubiquitin chains of the cytoplasmic innate immune receptors RIGI and IFIH1 stimulates the cellular response to viral infection. The polypeptide is Ubiquitin carboxyl-terminal hydrolase 17 (USP17L2) (Homo sapiens (Human)).